A 327-amino-acid chain; its full sequence is MALVHKLLRGTYFLRKFXKPTSALYPFLGIRFAEYSSSLQKPVASPGKASSQRKTEGDLQGDHQKEVALDITSSEEKPDVSFDKAIRDEAMYHFRHLKDEIVDHWRGPEGHPLHEVLLEQAKVVWQFRGKEDLDKWTVTSDKTIGGRSEVFLKMGKNNQSALLYGTLSSEAPQDGESTRSGYCAMISRIPRGAFERKMSYDWSQFNTLYLRVRGDGRPWMVNIKEDTDFFQRTNQMYSYFMFTRGGPYWQEVKIPFSKFFFSNRGRIRDVQHELPLDKISSIGFTLADKVDGPFFLEIDFIGVFTDPAHTEEFAYENSPELNPRLFK.

The N-terminal 24 residues, 1 to 24 (MALVHKLLRGTYFLRKFXKPTSAL), are a transit peptide targeting the mitochondrion. Residues 42–63 (PVASPGKASSQRKTEGDLQGDH) form a disordered region. Over residues 53–63 (RKTEGDLQGDH) the composition is skewed to basic and acidic residues. Ser318 carries the post-translational modification Phosphoserine.

This sequence belongs to the CIA30 family. As to quaternary structure, part of the mitochondrial complex I assembly/MCIA complex that comprises at least the core subunits TMEM126B, NDUFAF1, ECSIT and ACAD9 and complement subunits such as COA1 and TMEM186. Interacts with ECSIT. Interacts with ACAD9. At early stages of complex I assembly, it is found in intermediate subcomplexes that contain different subunits including NDUFB6, NDUFA6, NDUFA9, NDUFS3, NDUFS7, ND1, ND2 and ND3. Interacts with TMEM70 and TMEM242.

The protein localises to the mitochondrion. It localises to the mitochondrion matrix. As part of the MCIA complex, involved in the assembly of the mitochondrial complex I. The sequence is that of Complex I intermediate-associated protein 30, mitochondrial from Pan troglodytes (Chimpanzee).